A 230-amino-acid polypeptide reads, in one-letter code: Orotidine 5'-phosphate decarboxylase (230 aa).

Residues Asp10, Lys31, 58–67, Thr117, Arg179, Gln188, Gly208, and Arg209 contribute to the substrate site; that span reads DLKLHDIPNT. Lys60 serves as the catalytic Proton donor.

The protein belongs to the OMP decarboxylase family. Type 1 subfamily. In terms of assembly, homodimer.

It carries out the reaction orotidine 5'-phosphate + H(+) = UMP + CO2. The protein operates within pyrimidine metabolism; UMP biosynthesis via de novo pathway; UMP from orotate: step 2/2. Its function is as follows. Catalyzes the decarboxylation of orotidine 5'-monophosphate (OMP) to uridine 5'-monophosphate (UMP). The sequence is that of Orotidine 5'-phosphate decarboxylase from Staphylococcus aureus (strain Mu3 / ATCC 700698).